A 365-amino-acid chain; its full sequence is MADQDQLKALRLRIDSLDEKLLELISERARCAQDVARVKTQTLGEGEAPVFYRPEREAWVLKHIMQLNKGPLDNEEVARLFREIMSSCLALEQPLKVAYLGPEGTFTQAAALKHFGNAVISTPMAAIDEVFREVAAGAVNFGVVPVENSTEGAVNHTLDSFLEHDMVICGEVELRIHHHLLVGETTKTDNITRIYSHAQSLAQCRKWLDSHYPSVERVAVSSNADAAKRVKSEWNSAAIAGDMAASLYDLSKLHEKIEDRPDNSTRFLIIGNQEVPPTGDDKTSIIVSMRNKPGALHELLVPFHNNGIDLTRIETRPSRSGKWTYVFFIDFVGHHKEPLIKDVLEKIGQEAVALKVLGSYPKAVL.

Positions 1–96 constitute a Chorismate mutase domain; it reads MADQDQLKAL…SCLALEQPLK (96 aa). Positions 11, 28, 39, and 57 each coordinate substrate. Residues 97–272 enclose the Prephenate dehydratase domain; it reads VAYLGPEGTF…NSTRFLIIGN (176 aa). The 78-residue stretch at 284 to 361 folds into the ACT domain; sequence SIIVSMRNKP…VALKVLGSYP (78 aa).

The protein resides in the cytoplasm. The catalysed reaction is chorismate = prephenate. It catalyses the reaction prephenate + H(+) = 3-phenylpyruvate + CO2 + H2O. It participates in amino-acid biosynthesis; L-phenylalanine biosynthesis; phenylpyruvate from prephenate: step 1/1. It functions in the pathway metabolic intermediate biosynthesis; prephenate biosynthesis; prephenate from chorismate: step 1/1. Functionally, catalyzes the Claisen rearrangement of chorismate to prephenate and the decarboxylation/dehydration of prephenate to phenylpyruvate. The chain is Bifunctional chorismate mutase/prephenate dehydratase (pheA) from Pseudomonas aeruginosa (strain ATCC 15692 / DSM 22644 / CIP 104116 / JCM 14847 / LMG 12228 / 1C / PRS 101 / PAO1).